The following is a 140-amino-acid chain: Active regulator of SIRT1 (140 aa).

Disordered stretches follow at residues 1 to 52 (MSAS…KNKA) and 95 to 123 (QQVLTQNRGRKSKDRPAEKKEKKKPEGTV). Residues 108 to 120 (DRPAEKKEKKKPE) show a composition bias toward basic and acidic residues.

The protein belongs to the AROS family. As to quaternary structure, part of the small subunit (SSU) processome, composed of more than 70 proteins and the RNA chaperone small nucleolar RNA (snoRNA) U3.

It localises to the nucleus. The protein localises to the nucleolus. Its function is as follows. Part of the small subunit (SSU) processome, first precursor of the small eukaryotic ribosomal subunit. During the assembly of the SSU processome in the nucleolus, many ribosome biogenesis factors, an RNA chaperone and ribosomal proteins associate with the nascent pre-rRNA and work in concert to generate RNA folding, modifications, rearrangements and cleavage as well as targeted degradation of pre-ribosomal RNA by the RNA exosome. Acts as a chaperone that specifically mediates the integration of RPS19 in state post-A1. Direct regulator of SIRT1. The protein is Active regulator of SIRT1 (RPS19BP1) of Gallus gallus (Chicken).